Reading from the N-terminus, the 285-residue chain is K88 fimbrial protein AB (285 aa).

An N-terminal signal peptide occupies residues 1–21; sequence MKKTLIALAIAASAASGMAHA.

This sequence belongs to the fimbrial K88 protein family. K88 fimbria, 0.1-1 micrometer in length and 7 nanometers in diameter, is composed of about 100 identical subunits.

It localises to the fimbrium. K88 major fimbrial subunit. Fimbriae (also called pili), are polar filaments radiating from the surface of the bacterium to a length of 0.5-1.5 micrometers and numbering 100-300 per cell. They enable bacteria to colonize the epithelium of specific host organs. The polypeptide is K88 fimbrial protein AB (faeG) (Escherichia coli).